The primary structure comprises 358 residues: Homoserine O-acetyltransferase (358 aa).

One can recognise an AB hydrolase-1 domain in the interval 41–343 (NAVLICHALT…DYGHDAFLVD (303 aa)). The active-site Nucleophile is Ser-143. A substrate-binding site is contributed by Arg-212. Catalysis depends on residues Asp-304 and His-337. Asp-338 contributes to the substrate binding site.

Homodimer.

Its subcellular location is the cytoplasm. It catalyses the reaction L-homoserine + acetyl-CoA = O-acetyl-L-homoserine + CoA. The protein operates within amino-acid biosynthesis; L-methionine biosynthesis via de novo pathway; O-acetyl-L-homoserine from L-homoserine: step 1/1. Its function is as follows. Transfers an acetyl group from acetyl-CoA to L-homoserine, forming acetyl-L-homoserine. Utilizes a ping-pong kinetic mechanism in which the acetyl group of acetyl-CoA is initially transferred to the enzyme to form an acetyl-enzyme intermediate before subsequent transfer to homoserine to form the final product, O-acetylhomoserine. This chain is Homoserine O-acetyltransferase, found in Haemophilus influenzae (strain ATCC 51907 / DSM 11121 / KW20 / Rd).